Reading from the N-terminus, the 102-residue chain is Small ribosomal subunit protein uS10 (102 aa).

The protein belongs to the universal ribosomal protein uS10 family. Part of the 30S ribosomal subunit.

Functionally, involved in the binding of tRNA to the ribosomes. The polypeptide is Small ribosomal subunit protein uS10 (Chelativorans sp. (strain BNC1)).